The sequence spans 425 residues: Monoacylglycerol lipase ABHD2 (425 aa).

Residues Met-1–Glu-9 lie on the Cytoplasmic side of the membrane. A helical; Signal-anchor for type II membrane protein transmembrane segment spans residues Leu-10–Val-30. Residues Arg-31–Glu-425 are Extracellular-facing. One can recognise an AB hydrolase-1 domain in the interval Met-128–Gly-382. Asn-136 carries an N-linked (GlcNAc...) asparagine glycan. Ser-207 serves as the catalytic Nucleophile. Active-site charge relay system residues include Asp-345 and His-376. A glycan (N-linked (GlcNAc...) asparagine) is linked at Asn-410.

It belongs to the AB hydrolase superfamily. AB hydrolase 4 family.

It is found in the cell membrane. The catalysed reaction is Hydrolyzes glycerol monoesters of long-chain fatty acids.. It catalyses the reaction an acetyl ester + H2O = an aliphatic alcohol + acetate + H(+). It carries out the reaction a triacylglycerol + H2O = a diacylglycerol + a fatty acid + H(+). The enzyme catalyses 2-(5Z,8Z,11Z,14Z-eicosatetraenoyl)-glycerol + H2O = glycerol + (5Z,8Z,11Z,14Z)-eicosatetraenoate + H(+). The catalysed reaction is a butanoate ester + H2O = an aliphatic alcohol + butanoate + H(+). It catalyses the reaction hexadecanoate ester + H2O = an aliphatic alcohol + hexadecanoate + H(+). Acylglycerol lipase activity is activated upon binding to progesterone. Its function is as follows. Progesterone-dependent acylglycerol lipase that catalyzes hydrolysis of endocannabinoid arachidonoylglycerol (AG) from cell membrane. Acts as a progesterone receptor: progesterone-binding activates the acylglycerol lipase activity, mediating degradation of 1-arachidonoylglycerol (1AG) and 2-arachidonoylglycerol (2AG) to glycerol and arachidonic acid (AA). Also displays an ester hydrolase activity against acetyl ester, butanoate ester and hexadecanoate ester. Plays a key role in sperm capacitation in response to progesterone by mediating degradation of 2AG, an inhibitor of the sperm calcium channel CatSper, leading to calcium influx via CatSper and sperm activation. May also play a role in smooth muscle cells migration. This chain is Monoacylglycerol lipase ABHD2 (ABHD2), found in Macaca fascicularis (Crab-eating macaque).